The primary structure comprises 267 residues: Cell division protein FtsQ (267 aa).

Topologically, residues 1 to 32 (MRKKTSSNKKKQTKKTNNISLRRKLRLIYKKA) are cytoplasmic. The helical transmembrane segment at 33-53 (ILGLKIALIIFVCLFVFTKYF) threads the bilayer. Over 54 to 267 (AGIKTYLTTN…DKNKYYIEKY (214 aa)) the chain is Periplasmic. A POTRA domain is found at 73–141 (FKLENVIIEG…NTVYIKLFER (69 aa)).

Belongs to the FtsQ/DivIB family. FtsQ subfamily.

It is found in the cell inner membrane. Its function is as follows. Essential cell division protein. In Rickettsia felis (strain ATCC VR-1525 / URRWXCal2) (Rickettsia azadi), this protein is Cell division protein FtsQ.